The primary structure comprises 669 residues: Probable potassium transport system protein Kup (669 aa).

The next 12 membrane-spanning stretches (helical) occupy residues 47–67, 86–106, 144–164, 172–192, 206–226, 252–272, 288–308, 326–346, 378–398, 404–424, 435–455, and 460–480; these read VLMLALGALGVVFGDIGTSPL, VIGILSLIFWTLVLAICIKYM, TIIGLFGAALLYGDGIITPAI, GLTLVAPQFSPYIIPLTIFVM, IGVIFGPILLIWFTVLGLLGI, GMAGFLVLGSVFLVVTGGEAL, WFFVALPALVLNYFGQGALLL, ALLPMVMLSTMATVIASQALI, IYIPIVNWSMFIGVIWLVLTF, LAAAYGIAVTGATMITTILAF, LLKSSAIFGSFLVMDLAFFGA, and IPHGGWVPLVIGAIIYLLMTT.

This sequence belongs to the HAK/KUP transporter (TC 2.A.72) family.

The protein localises to the cell inner membrane. The enzyme catalyses K(+)(in) + H(+)(in) = K(+)(out) + H(+)(out). Functionally, transport of potassium into the cell. Likely operates as a K(+):H(+) symporter. This Bdellovibrio bacteriovorus (strain ATCC 15356 / DSM 50701 / NCIMB 9529 / HD100) protein is Probable potassium transport system protein Kup.